We begin with the raw amino-acid sequence, 318 residues long: Pyrimidine-specific ribonucleoside hydrolase RihA (318 aa).

His240 is a catalytic residue.

The protein belongs to the IUNH family. RihA subfamily.

Hydrolyzes cytidine or uridine to ribose and cytosine or uracil, respectively. This chain is Pyrimidine-specific ribonucleoside hydrolase RihA, found in Shewanella baltica (strain OS155 / ATCC BAA-1091).